A 175-amino-acid polypeptide reads, in one-letter code: Nucleoside triphosphate/diphosphate phosphatase (175 aa).

Arg-23 (proton donor) is an active-site residue. Residues Asn-87, Asp-103, Asp-105, Asp-107, Asp-120, and Glu-123 each coordinate Mg(2+).

Belongs to the Ntdp family. Mg(2+) is required as a cofactor.

The catalysed reaction is a ribonucleoside 5'-triphosphate + H2O = a ribonucleoside 5'-diphosphate + phosphate + H(+). It carries out the reaction a ribonucleoside 5'-diphosphate + H2O = a ribonucleoside 5'-phosphate + phosphate + H(+). In terms of biological role, has nucleoside phosphatase activity towards nucleoside triphosphates and nucleoside diphosphates. In Listeria monocytogenes serotype 4b (strain CLIP80459), this protein is Nucleoside triphosphate/diphosphate phosphatase.